The chain runs to 675 residues: Acetyl-coenzyme A synthetase 2 (675 aa).

Residues 206 to 209 (RGGK) and Thr325 each bind CoA. Residues 401 to 403 (GEP), 425 to 430 (DTMWQT), Asp516, and Arg531 contribute to the ATP site. Ser539 is a binding site for CoA. Arg542 contacts ATP. Residue Arg604 participates in CoA binding.

The protein belongs to the ATP-dependent AMP-binding enzyme family.

It carries out the reaction acetate + ATP + CoA = acetyl-CoA + AMP + diphosphate. This Zygosaccharomyces bailii protein is Acetyl-coenzyme A synthetase 2 (ACS2).